Here is a 273-residue protein sequence, read N- to C-terminus: Nitrogenase iron protein 2 (273 aa).

8-15 contributes to the ATP binding site; the sequence is GKGGIGKS. Cys-95 contributes to the [4Fe-4S] cluster binding site. Arg-98 is subject to ADP-ribosylarginine; by dinitrogenase reductase ADP-ribosyltransferase. [4Fe-4S] cluster is bound at residue Cys-130.

It belongs to the NifH/BchL/ChlL family. As to quaternary structure, homodimer. [4Fe-4S] cluster serves as cofactor. In terms of processing, the reversible ADP-ribosylation of Arg-98 inactivates the nitrogenase reductase and regulates nitrogenase activity.

It catalyses the reaction N2 + 8 reduced [2Fe-2S]-[ferredoxin] + 16 ATP + 16 H2O = H2 + 8 oxidized [2Fe-2S]-[ferredoxin] + 2 NH4(+) + 16 ADP + 16 phosphate + 6 H(+). Functionally, the key enzymatic reactions in nitrogen fixation are catalyzed by the nitrogenase complex, which has 2 components: the iron protein and the molybdenum-iron protein. The chain is Nitrogenase iron protein 2 (nifH2) from Methanosarcina barkeri.